Consider the following 596-residue polypeptide: Neuroepithelial cell-transforming gene 1 protein (596 aa).

Met-1 carries the N-acetylmethionine modification. The interval Met-1–Cys-44 is disordered. The segment at Met-1–Asp-74 is necessary for nuclear localization. Residues Arg-12–Arg-19 carry the Nuclear localization signal motif. Phosphoserine is present on residues Ser-21 and Ser-32. The span at Gly-22 to Ser-38 shows a compositional bias: polar residues. Residues Lys-66 to Lys-72 carry the Nuclear localization signal motif. Ser-100, Ser-106, and Ser-122 each carry phosphoserine. Positions Gly-127–Thr-146 are disordered. Polar residues predominate over residues Ala-133 to Pro-145. In terms of domain architecture, DH spans Arg-174–Lys-356. The PH domain occupies Val-386–Ala-501. Ser-508 carries the post-translational modification Phosphoserine. Residues Met-562 to Val-596 form a disordered region.

Interacts with RHOA in its GTP- and GDP-bound states, and with CDC42 in its GTP-bound state. Interacts with the PDZ 1 domain of BAIAP1. As to expression, widely expressed.

Its subcellular location is the cytoplasm. The protein resides in the nucleus. Its function is as follows. Acts as a guanine nucleotide exchange factor (GEF) for RhoA GTPase. May be involved in activation of the SAPK/JNK pathway Stimulates genotoxic stress-induced RHOB activity in breast cancer cells leading to their cell death. The protein is Neuroepithelial cell-transforming gene 1 protein (NET1) of Homo sapiens (Human).